A 191-amino-acid chain; its full sequence is Photosystem I assembly protein Ycf4 (191 aa).

A run of 2 helical transmembrane segments spans residues 33-53 and 74-94; these read LLAV…LSSY and LVMG…WAMI.

The protein belongs to the Ycf4 family.

Its subcellular location is the cellular thylakoid membrane. Seems to be required for the assembly of the photosystem I complex. The sequence is that of Photosystem I assembly protein Ycf4 from Prochlorococcus marinus (strain MIT 9303).